The sequence spans 485 residues: GTPase Obg (485 aa).

The Obg domain occupies 2-159; the sequence is PRFVDRVVIH…RDLTLELKTV (158 aa). One can recognise an OBG-type G domain in the interval 160 to 341; it reads ADVGLIGFPS…LIFALWEMVK (182 aa). Residues 166 to 173, 191 to 195, 212 to 215, 292 to 295, and 322 to 324 contribute to the GTP site; these read GFPSAGKS, FTTLV, DVPG, NKID, and STV. Mg(2+) is bound by residues serine 173 and threonine 193. The region spanning 359–437 is the OCT domain; it reads PIPVDESGFT…IGDVTFDWEP (79 aa). The segment at 450-485 is disordered; it reads RGTDIRLEQTDRVGAAERKAARRERRQPGESGGEDS. The span at 452 to 468 shows a compositional bias: basic and acidic residues; sequence TDIRLEQTDRVGAAERK.

The protein belongs to the TRAFAC class OBG-HflX-like GTPase superfamily. OBG GTPase family. Monomer. The cofactor is Mg(2+).

The protein resides in the cytoplasm. An essential GTPase which binds GTP, GDP and possibly (p)ppGpp with moderate affinity, with high nucleotide exchange rates and a fairly low GTP hydrolysis rate. Plays a role in control of the cell cycle, stress response, ribosome biogenesis and in those bacteria that undergo differentiation, in morphogenesis control. The polypeptide is GTPase Obg (Mycolicibacterium smegmatis (strain ATCC 700084 / mc(2)155) (Mycobacterium smegmatis)).